The chain runs to 168 residues: Ribosome maturation factor RimM (168 aa).

The PRC barrel domain maps to 96–168 (EGDYYWTDLI…IIVVEWDADF (73 aa)).

This sequence belongs to the RimM family. As to quaternary structure, binds ribosomal protein uS19.

Its subcellular location is the cytoplasm. Its function is as follows. An accessory protein needed during the final step in the assembly of 30S ribosomal subunit, possibly for assembly of the head region. Essential for efficient processing of 16S rRNA. May be needed both before and after RbfA during the maturation of 16S rRNA. It has affinity for free ribosomal 30S subunits but not for 70S ribosomes. This chain is Ribosome maturation factor RimM, found in Coxiella burnetii (strain Dugway 5J108-111).